A 310-amino-acid chain; its full sequence is Methionyl-tRNA formyltransferase (310 aa).

Residue 111–114 participates in (6S)-5,6,7,8-tetrahydrofolate binding; it reads SLLP.

This sequence belongs to the Fmt family.

It catalyses the reaction L-methionyl-tRNA(fMet) + (6R)-10-formyltetrahydrofolate = N-formyl-L-methionyl-tRNA(fMet) + (6S)-5,6,7,8-tetrahydrofolate + H(+). In terms of biological role, attaches a formyl group to the free amino group of methionyl-tRNA(fMet). The formyl group appears to play a dual role in the initiator identity of N-formylmethionyl-tRNA by promoting its recognition by IF2 and preventing the misappropriation of this tRNA by the elongation apparatus. In Rhodopseudomonas palustris (strain ATCC BAA-98 / CGA009), this protein is Methionyl-tRNA formyltransferase.